Consider the following 1481-residue polypeptide: ABC-type transporter braE (1481 aa).

6 helical membrane passes run 27–47 (FTVK…FILA), 86–106 (LILI…SSAL), 130–150 (IFLS…ARTY), 159–179 (EIAF…MLLL), 269–289 (LYVP…SFFC), and 308–328 (PANI…VIAI). Residues 281 to 549 (LAAIGSFFCQ…LLETLPQMAA (269 aa)) form the ABC transmembrane type-1 1 domain. The N-linked (GlcNAc...) asparagine glycan is linked to Asn-367. The next 3 membrane-spanning stretches (helical) occupy residues 389-409 (ELWG…NLLG), 410-430 (VAFI…SFFM), and 491-511 (LMLT…PITF). The ABC transporter 1 domain maps to 594–823 (VAIKDGSFGW…QSYIHSLGVK (230 aa)). Residue 627–634 (GPIASGKS) coordinates ATP. Residues Asn-671 and Asn-813 are each glycosylated (N-linked (GlcNAc...) asparagine). 6 helical membrane passes run 887–907 (IAIF…TIWL), 928–948 (AIYA…GVLL), 1001–1021 (SALL…AVIA), 1026–1046 (YLAI…KFYL), 1111–1131 (LHFV…SLAV), and 1144–1164 (LVTL…YTAL). The region spanning 887–1166 (IAIFTSGLLY…VVIYYTALET (280 aa)) is the ABC transmembrane type-1 2 domain. 2 N-linked (GlcNAc...) asparagine glycosylation sites follow: Asn-1207 and Asn-1232. The ABC transporter 2 domain occupies 1224 to 1477 (LTTNELSSND…PGTRFGELWS (254 aa)). 1260–1267 (GRTGSGKS) provides a ligand contact to ATP. N-linked (GlcNAc...) asparagine glycosylation is found at Asn-1330 and Asn-1364.

It belongs to the ABC transporter superfamily. ABCC family. Conjugate transporter (TC 3.A.1.208) subfamily.

It is found in the membrane. Its function is as follows. ABC-type transporter; part of the gene cluster that mediates the biosynthesis of the brasilane terpene glycosides brasilane D and E. The sequence is that of ABC-type transporter braE from Annulohypoxylon truncatum (Hypoxylon truncatum).